The primary structure comprises 513 residues: Secreted LysM effector Vd6LysM (513 aa).

The signal sequence occupies residues M1 to A19. 4 consecutive LysM domains span residues S38–V85, K136–V182, K219–V265, and K302–V348. Positions T357–P367 are enriched in low complexity. Residues T357–T377 form a disordered region. LysM domains follow at residues K387–V433 and K465–V511.

It belongs to the secreted LysM effector family.

Might have a role in sequestration of chitin oligosaccharides (breakdown products of fungal cell walls that are released during invasion and act as triggers of host immunity) to dampen host defense. Does not play an important role during host colonization. The polypeptide is Secreted LysM effector Vd6LysM (Verticillium dahliae (strain VdLs.17 / ATCC MYA-4575 / FGSC 10137) (Verticillium wilt)).